We begin with the raw amino-acid sequence, 237 residues long: Phosphoribosylaminoimidazole-succinocarboxamide synthase (237 aa).

It belongs to the SAICAR synthetase family.

The catalysed reaction is 5-amino-1-(5-phospho-D-ribosyl)imidazole-4-carboxylate + L-aspartate + ATP = (2S)-2-[5-amino-1-(5-phospho-beta-D-ribosyl)imidazole-4-carboxamido]succinate + ADP + phosphate + 2 H(+). It participates in purine metabolism; IMP biosynthesis via de novo pathway; 5-amino-1-(5-phospho-D-ribosyl)imidazole-4-carboxamide from 5-amino-1-(5-phospho-D-ribosyl)imidazole-4-carboxylate: step 1/2. This chain is Phosphoribosylaminoimidazole-succinocarboxamide synthase, found in Methanosarcina acetivorans (strain ATCC 35395 / DSM 2834 / JCM 12185 / C2A).